Here is a 116-residue protein sequence, read N- to C-terminus: Putative pterin-4-alpha-carbinolamine dehydratase 1 (116 aa).

Belongs to the pterin-4-alpha-carbinolamine dehydratase family.

It carries out the reaction (4aS,6R)-4a-hydroxy-L-erythro-5,6,7,8-tetrahydrobiopterin = (6R)-L-erythro-6,7-dihydrobiopterin + H2O. This chain is Putative pterin-4-alpha-carbinolamine dehydratase 1, found in Cupriavidus pinatubonensis (strain JMP 134 / LMG 1197) (Cupriavidus necator (strain JMP 134)).